Reading from the N-terminus, the 370-residue chain is Chaperone protein DnaJ (370 aa).

Residues 6 to 70 (DYYEVLGVQR…EKRSMYDRFG (65 aa)) enclose the J domain. The segment at 128–208 (GVEKTIEYRR…CRGEGRIRQT (81 aa)) adopts a CR-type zinc-finger fold. Residues Cys141, Cys144, Cys158, Cys161, Cys182, Cys185, Cys196, and Cys199 each coordinate Zn(2+). 4 CXXCXGXG motif repeats span residues 141 to 148 (CPACRGSG), 158 to 165 (CPKCGGLG), 182 to 189 (CDMCRGEG), and 196 to 203 (CRECRGEG).

Belongs to the DnaJ family. As to quaternary structure, homodimer. The cofactor is Zn(2+).

It localises to the cytoplasm. Participates actively in the response to hyperosmotic and heat shock by preventing the aggregation of stress-denatured proteins and by disaggregating proteins, also in an autonomous, DnaK-independent fashion. Unfolded proteins bind initially to DnaJ; upon interaction with the DnaJ-bound protein, DnaK hydrolyzes its bound ATP, resulting in the formation of a stable complex. GrpE releases ADP from DnaK; ATP binding to DnaK triggers the release of the substrate protein, thus completing the reaction cycle. Several rounds of ATP-dependent interactions between DnaJ, DnaK and GrpE are required for fully efficient folding. Also involved, together with DnaK and GrpE, in the DNA replication of plasmids through activation of initiation proteins. The protein is Chaperone protein DnaJ of Roseiflexus castenholzii (strain DSM 13941 / HLO8).